The primary structure comprises 257 residues: Short chain dehydrogenase ausX (257 aa).

Residues I11, D57, R119, Y151, K155, and V184 each contribute to the NADP(+) site. The active-site Proton acceptor is Y151. The active-site Lowers pKa of active site Tyr is the K155.

This sequence belongs to the short-chain dehydrogenases/reductases (SDR) family.

It participates in secondary metabolite biosynthesis; terpenoid biosynthesis. Its function is as follows. Short chain dehydrogenase; part of the gene cluster that mediates the biosynthesis of calidodehydroaustin, a fungal meroterpenoid. The first step of the pathway is the synthesis of 3,5-dimethylorsellinic acid by the polyketide synthase ausA. 3,5-dimethylorsellinic acid is then prenylated by the polyprenyl transferase ausN. Further epoxidation by the FAD-dependent monooxygenase ausM and cyclization by the probable terpene cyclase ausL lead to the formation of protoaustinoid A. Protoaustinoid A is then oxidized to spiro-lactone preaustinoid A3 by the combined action of the FAD-binding monooxygenases ausB and ausC, and the dioxygenase ausE. Acid-catalyzed keto-rearrangement and ring contraction of the tetraketide portion of preaustinoid A3 by ausJ lead to the formation of preaustinoid A4. The aldo-keto reductase ausK, with the help of ausH, is involved in the next step by transforming preaustinoid A4 into isoaustinone which is in turn hydroxylated by the P450 monooxygenase ausI to form austinolide. The cytochrome P450 monooxygenase ausG modifies austinolide to austinol. Austinol is further acetylated to austin by the O-acetyltransferase ausP, which spontaneously changes to dehydroaustin. The cytochrome P450 monooxygenase ausR then converts dehydroaustin is into 7-dehydrodehydroaustin. The hydroxylation catalyzed by ausR permits the O-acetyltransferase ausQ to add an additional acetyl group to the molecule, leading to the formation of acetoxydehydroaustin. The short chain dehydrogenase ausT catalyzes the reduction of the double bond present between carbon atoms 1 and 2 to convert 7-dehydrodehydroaustin into 1,2-dihydro-7-hydroxydehydroaustin. AusQ catalyzes not only an acetylation reaction but also the addition of the PKS ausV diketide product to 1,2-dihydro-7-hydroxydehydroaustin, forming precalidodehydroaustin. Finally, the iron/alpha-ketoglutarate-dependent dioxygenase converts precalidodehydroaustin into calidodehydroaustin. This Aspergillus calidoustus protein is Short chain dehydrogenase ausX.